The primary structure comprises 802 residues: Copper-exporting P-type ATPase (802 aa).

HMA domains follow at residues 5–70 and 72–138; these read KKTT…YGVA and ETVE…YDAS. Cys-16, Cys-19, Cys-83, and Cys-86 together coordinate Cu(+). Helical transmembrane passes span 161-181, 192-212, 224-244, 256-276, 411-431, and 438-458; these read LIIS…HLFN, WFQF…FYVG, MDVL…YEMV, LYFE…YLEA, YFVP…ITLV, and PALV…LGLA. Asp-495 acts as the 4-aspartylphosphate intermediate in catalysis. Mg(2+) contacts are provided by Asp-690 and Asp-694. Transmembrane regions (helical) follow at residues 748-767 and 771-790; these read LFWA…LGLL and VAGA…ALRL.

Belongs to the cation transport ATPase (P-type) (TC 3.A.3) family. Type IB subfamily.

The protein resides in the cell membrane. It catalyses the reaction Cu(+)(in) + ATP + H2O = Cu(+)(out) + ADP + phosphate + H(+). In terms of biological role, involved in copper export. In Staphylococcus aureus (strain MRSA252), this protein is Copper-exporting P-type ATPase (copA).